The following is a 126-amino-acid chain: Arginine decarboxylase proenzyme (126 aa).

The active-site Schiff-base intermediate with substrate; via pyruvic acid is serine 74. Serine 74 bears the Pyruvic acid (Ser); by autocatalysis mark. Catalysis depends on histidine 79, which acts as the Proton acceptor; for processing activity. Cysteine 94 acts as the Proton donor; for catalytic activity in catalysis.

The protein belongs to the prokaryotic AdoMetDC family. Type 1 subfamily. As to quaternary structure, heterooctamer of four alpha and four beta chains arranged as a tetramer of alpha/beta heterodimers. The cofactor is pyruvate. Post-translationally, is synthesized initially as an inactive proenzyme. Formation of the active enzyme involves a self-maturation process in which the active site pyruvoyl group is generated from an internal serine residue via an autocatalytic post-translational modification. Two non-identical subunits are generated from the proenzyme in this reaction, and the pyruvate is formed at the N-terminus of the alpha chain, which is derived from the carboxyl end of the proenzyme. The post-translation cleavage follows an unusual pathway, termed non-hydrolytic serinolysis, in which the side chain hydroxyl group of the serine supplies its oxygen atom to form the C-terminus of the beta chain, while the remainder of the serine residue undergoes an oxidative deamination to produce ammonia and the pyruvoyl group blocking the N-terminus of the alpha chain.

It carries out the reaction L-arginine + H(+) = agmatine + CO2. It functions in the pathway amine and polyamine biosynthesis; agmatine biosynthesis; agmatine from L-arginine: step 1/1. Specifically catalyzes the decarboxylation of L-arginine to agmatine. Has no S-adenosylmethionine decarboxylase (AdoMetDC) activity. This chain is Arginine decarboxylase proenzyme, found in Pyrobaculum neutrophilum (strain DSM 2338 / JCM 9278 / NBRC 100436 / V24Sta) (Thermoproteus neutrophilus).